A 132-amino-acid polypeptide reads, in one-letter code: Small ribosomal subunit protein uS8 (132 aa).

This sequence belongs to the universal ribosomal protein uS8 family. In terms of assembly, part of the 30S ribosomal subunit. Contacts proteins S5 and S12.

Its function is as follows. One of the primary rRNA binding proteins, it binds directly to 16S rRNA central domain where it helps coordinate assembly of the platform of the 30S subunit. This chain is Small ribosomal subunit protein uS8, found in Leuconostoc mesenteroides subsp. mesenteroides (strain ATCC 8293 / DSM 20343 / BCRC 11652 / CCM 1803 / JCM 6124 / NCDO 523 / NBRC 100496 / NCIMB 8023 / NCTC 12954 / NRRL B-1118 / 37Y).